The chain runs to 239 residues: Glucosamine-6-phosphate deaminase (239 aa).

Residue D62 is the Proton acceptor; for enolization step of the active site. The For ring-opening step role is filled by N128. H130 serves as the catalytic Proton acceptor; for ring-opening step. E135 functions as the For ring-opening step in the catalytic mechanism.

The protein belongs to the glucosamine/galactosamine-6-phosphate isomerase family. NagB subfamily.

The enzyme catalyses alpha-D-glucosamine 6-phosphate + H2O = beta-D-fructose 6-phosphate + NH4(+). It functions in the pathway amino-sugar metabolism; N-acetylneuraminate degradation; D-fructose 6-phosphate from N-acetylneuraminate: step 5/5. Functionally, catalyzes the reversible isomerization-deamination of glucosamine 6-phosphate (GlcN6P) to form fructose 6-phosphate (Fru6P) and ammonium ion. This is Glucosamine-6-phosphate deaminase from Lactobacillus acidophilus (strain ATCC 700396 / NCK56 / N2 / NCFM).